The chain runs to 294 residues: MKKAMVIINPTSGGEKALDYKEKLENKAKEYFEYVETKITEKALDATHFAEEASREQYDAVVVFGGDGTVNEVISGIDERDYIPKLGIIPGGTGNLITKLLEINQDIDGAIDELDFDLTNKIDIGKANDNYFGYIFSIGSLPEAIHNVEIEDKTKFGILTYAVNTMKSVMTDQVFNIKVETENGNYVGEASHVLVLLTNYFADKKIFEENKDGYANILILKDASIFSKLSVIPDLLKGDVVANDNIEYIKARNIKISSDSELESDVDGDKSDNLPVEIKVLAQRVEVFSKPKED.

Residues 1–131 (MKKAMVIINP…IDIGKANDNY (131 aa)) form the DAGKc domain. Residues 9 to 13 (NPTSG), T40, 66 to 72 (GDGTVNE), and T93 contribute to the ATP site. Mg(2+) is bound by residues D212 and Y214. The Proton acceptor role is filled by D269.

This sequence belongs to the diacylglycerol/lipid kinase family. Mg(2+) serves as cofactor.

In terms of biological role, may catalyze the ATP-dependent phosphorylation of lipids other than diacylglycerol (DAG). In fact, is not able to exhibit diacylglycerol kinase activity in vitro. The polypeptide is Putative lipid kinase SP_1045 (Streptococcus pneumoniae serotype 4 (strain ATCC BAA-334 / TIGR4)).